An 854-amino-acid polypeptide reads, in one-letter code: DNA mismatch repair protein MutS (854 aa).

Residue 614–621 (GPNMGGKS) coordinates ATP.

It belongs to the DNA mismatch repair MutS family.

This protein is involved in the repair of mismatches in DNA. It is possible that it carries out the mismatch recognition step. This protein has a weak ATPase activity. This Yersinia pestis bv. Antiqua (strain Antiqua) protein is DNA mismatch repair protein MutS.